The primary structure comprises 20 residues: Unknown protein from 2D-PAGE (20 aa).

The polypeptide is Unknown protein from 2D-PAGE (Nicotiana tabacum (Common tobacco)).